The sequence spans 276 residues: Dermonecrotic toxin Ls4SicTox-alphaIII1i (276 aa).

The active site involves His3. Glu23 and Asp25 together coordinate Mg(2+). The Nucleophile role is filled by His38. Cys42 and Cys48 are joined by a disulfide. Residue Asp82 participates in Mg(2+) binding.

This sequence belongs to the arthropod phospholipase D family. Class I subfamily. Mg(2+) is required as a cofactor. Expressed by the venom gland.

It is found in the secreted. The enzyme catalyses an N-(acyl)-sphingosylphosphocholine = an N-(acyl)-sphingosyl-1,3-cyclic phosphate + choline. It carries out the reaction an N-(acyl)-sphingosylphosphoethanolamine = an N-(acyl)-sphingosyl-1,3-cyclic phosphate + ethanolamine. It catalyses the reaction a 1-acyl-sn-glycero-3-phosphocholine = a 1-acyl-sn-glycero-2,3-cyclic phosphate + choline. The catalysed reaction is a 1-acyl-sn-glycero-3-phosphoethanolamine = a 1-acyl-sn-glycero-2,3-cyclic phosphate + ethanolamine. Its function is as follows. Dermonecrotic toxins cleave the phosphodiester linkage between the phosphate and headgroup of certain phospholipids (sphingolipid and lysolipid substrates), forming an alcohol (often choline) and a cyclic phosphate. This toxin acts on sphingomyelin (SM). It may also act on ceramide phosphoethanolamine (CPE), lysophosphatidylcholine (LPC) and lysophosphatidylethanolamine (LPE), but not on lysophosphatidylserine (LPS), and lysophosphatidylglycerol (LPG). It acts by transphosphatidylation, releasing exclusively cyclic phosphate products as second products. Induces dermonecrosis, hemolysis, increased vascular permeability, edema, inflammatory response, and platelet aggregation. The polypeptide is Dermonecrotic toxin Ls4SicTox-alphaIII1i (Loxosceles sp. (strain 4 GJB-2008) (Recluse spider)).